A 616-amino-acid chain; its full sequence is Chaperone protein HscA (616 aa).

It belongs to the heat shock protein 70 family.

Functionally, chaperone involved in the maturation of iron-sulfur cluster-containing proteins. Has a low intrinsic ATPase activity which is markedly stimulated by HscB. Involved in the maturation of IscU. In Photorhabdus laumondii subsp. laumondii (strain DSM 15139 / CIP 105565 / TT01) (Photorhabdus luminescens subsp. laumondii), this protein is Chaperone protein HscA.